Consider the following 311-residue polypeptide: Aspartate carbamoyltransferase catalytic subunit (311 aa).

Carbamoyl phosphate contacts are provided by R58 and T59. Residue K86 coordinates L-aspartate. Residues R108, H136, and Q139 each contribute to the carbamoyl phosphate site. The L-aspartate site is built by R169 and R223. 2 residues coordinate carbamoyl phosphate: G264 and P265.

Belongs to the aspartate/ornithine carbamoyltransferase superfamily. ATCase family. Heterododecamer (2C3:3R2) of six catalytic PyrB chains organized as two trimers (C3), and six regulatory PyrI chains organized as three dimers (R2).

The catalysed reaction is carbamoyl phosphate + L-aspartate = N-carbamoyl-L-aspartate + phosphate + H(+). It functions in the pathway pyrimidine metabolism; UMP biosynthesis via de novo pathway; (S)-dihydroorotate from bicarbonate: step 2/3. Catalyzes the condensation of carbamoyl phosphate and aspartate to form carbamoyl aspartate and inorganic phosphate, the committed step in the de novo pyrimidine nucleotide biosynthesis pathway. In Desulfosudis oleivorans (strain DSM 6200 / JCM 39069 / Hxd3) (Desulfococcus oleovorans), this protein is Aspartate carbamoyltransferase catalytic subunit.